Reading from the N-terminus, the 261-residue chain is Putative ankyrin repeat protein L99 (261 aa).

ANK repeat units lie at residues 21–50, 51–80, 81–110, 112–140, 142–170, 171–203, and 231–259; these read KVNP…DVHA, HEDY…NIHS, DRDL…NVNA, QNSA…NIHA, NNFC…DINA, DNGA…IDNC, and NELK…NINS.

In Acanthamoeba polyphaga (Amoeba), this protein is Putative ankyrin repeat protein L99.